The chain runs to 231 residues: Enolase-phosphatase E1 (231 aa).

Residues 206–231 (LLERPGNAPQPKHSHPKISSFENFNP) are disordered.

Belongs to the HAD-like hydrolase superfamily. MasA/MtnC family. Monomer. The cofactor is Mg(2+).

It catalyses the reaction 5-methylsulfanyl-2,3-dioxopentyl phosphate + H2O = 1,2-dihydroxy-5-(methylsulfanyl)pent-1-en-3-one + phosphate. It functions in the pathway amino-acid biosynthesis; L-methionine biosynthesis via salvage pathway; L-methionine from S-methyl-5-thio-alpha-D-ribose 1-phosphate: step 3/6. The protein operates within amino-acid biosynthesis; L-methionine biosynthesis via salvage pathway; L-methionine from S-methyl-5-thio-alpha-D-ribose 1-phosphate: step 4/6. Functionally, bifunctional enzyme that catalyzes the enolization of 2,3-diketo-5-methylthiopentyl-1-phosphate (DK-MTP-1-P) into the intermediate 2-hydroxy-3-keto-5-methylthiopentenyl-1-phosphate (HK-MTPenyl-1-P), which is then dephosphorylated to form the acireductone 1,2-dihydroxy-3-keto-5-methylthiopentene (DHK-MTPene). The polypeptide is Enolase-phosphatase E1 (Leptospira borgpetersenii serovar Hardjo-bovis (strain JB197)).